The following is a 298-amino-acid chain: Nucleotide-binding protein Csal_2229 (298 aa).

ATP is bound at residue Gly-8–Ser-15. Asp-59–Asn-62 contacts GTP.

Belongs to the RapZ-like family.

Displays ATPase and GTPase activities. The protein is Nucleotide-binding protein Csal_2229 of Chromohalobacter salexigens (strain ATCC BAA-138 / DSM 3043 / CIP 106854 / NCIMB 13768 / 1H11).